The chain runs to 308 residues: Ribosomal RNA small subunit methyltransferase H (308 aa).

Residues 34–36, D54, F80, D101, and Q108 each bind S-adenosyl-L-methionine; that span reads GGH.

The protein belongs to the methyltransferase superfamily. RsmH family.

The protein resides in the cytoplasm. The enzyme catalyses cytidine(1402) in 16S rRNA + S-adenosyl-L-methionine = N(4)-methylcytidine(1402) in 16S rRNA + S-adenosyl-L-homocysteine + H(+). Its function is as follows. Specifically methylates the N4 position of cytidine in position 1402 (C1402) of 16S rRNA. This Ureaplasma parvum serovar 3 (strain ATCC 27815 / 27 / NCTC 11736) protein is Ribosomal RNA small subunit methyltransferase H.